Here is a 152-residue protein sequence, read N- to C-terminus: Deoxyuridine 5'-triphosphate nucleotidohydrolase (152 aa).

Residues 71 to 73, asparagine 84, 88 to 90, and methionine 98 contribute to the substrate site; these read RSG and LID.

Belongs to the dUTPase family. Mg(2+) is required as a cofactor.

The enzyme catalyses dUTP + H2O = dUMP + diphosphate + H(+). Its pathway is pyrimidine metabolism; dUMP biosynthesis; dUMP from dCTP (dUTP route): step 2/2. Functionally, this enzyme is involved in nucleotide metabolism: it produces dUMP, the immediate precursor of thymidine nucleotides and it decreases the intracellular concentration of dUTP so that uracil cannot be incorporated into DNA. The sequence is that of Deoxyuridine 5'-triphosphate nucleotidohydrolase from Shewanella sp. (strain MR-7).